We begin with the raw amino-acid sequence, 322 residues long: Transcription factor Atoh8 (322 aa).

3 disordered regions span residues 77 to 96 (PVPA…DTAR), 101 to 144 (IRAP…EAHS), and 159 to 221 (PPAR…ATAA). Over residues 101–111 (IRAPEVSDARK) the composition is skewed to basic and acidic residues. Residues 231–244 (TRRLLANARERTRV) form a basic motif; degenerate region. The 53-residue stretch at 231 to 283 (TRRLLANARERTRVHTISAAFEALRKQVPCYSYGQKLSKLAILRIACNYILSL) folds into the bHLH domain. A helix-loop-helix motif region spans residues 245-283 (HTISAAFEALRKQVPCYSYGQKLSKLAILRIACNYILSL).

As to quaternary structure, efficient DNA binding requires dimerization with another bHLH protein. Interacts with NEUROG3 and NEUROD1. Interacts with ZFPM2; mediates indirect interaction with GATA4. Forms a heterodimer with TCF3; repress transcription of TCF3 and TCF3/NEUROG3 dimer-induced transactivation of E box-dependent promoters. As to expression, expressed by subsets of mature neurons. Expressed in kidney (podocytes). Expression is restricted to the atria, lung mesenchyme, and vascular smooth muscle.

It is found in the nucleus. The protein resides in the nucleus speckle. The protein localises to the cytoplasm. In terms of biological role, transcription factor that binds a palindromic (canonical) core consensus DNA sequence 5'-CANNTG- 3' known as an E-box element, possibly as a heterodimer with other bHLH proteins. Regulates endothelial cell proliferation, migration and tube-like structures formation. Modulates endothelial cell differentiation through NOS3. May be implicated in specification and differentiation of neuronal cell lineages in the brain. May participate in kidney development and may be involved in podocyte differentiation. During early embryonic development is involved in tissue-specific differentiation processes that are dependent on class II bHLH factors and namely modulates the differentiation program initiated by the pro-endocrine factor NEUROG3. During myogenesis, may play a role during the transition of myoblasts from the proliferative phase to the differentiation phase. Positively regulates HAMP transcription in two ways, firstly by acting directly on the HAMP promoter via E-boxes binding and indirectly through increased phosphorylation of SMAD protein complex. Repress NEUROG3-dependent gene activation in a gene-specific manner through at least two mechanisms; requires only either the sequestering of a general partner such as TCF3 through heterodimerization, either also requires binding of the bHLH domain to DNA via a basic motif. This chain is Transcription factor Atoh8, found in Mus musculus (Mouse).